Here is a 458-residue protein sequence, read N- to C-terminus: GTPase Der (458 aa).

EngA-type G domains are found at residues 9–171 (KTIA…DLNQ) and 197–368 (IQVG…ECFS). GTP contacts are provided by residues 15–22 (GQPNVGKS), 62–66 (DTGGM), 123–126 (NKID), 203–210 (GRVNVGKS), 250–254 (DTAGI), and 314–317 (NKWD). Residues 369–453 (KRIPTSLLNS…PLILNAKDKK (85 aa)) form the KH-like domain.

The protein belongs to the TRAFAC class TrmE-Era-EngA-EngB-Septin-like GTPase superfamily. EngA (Der) GTPase family. Associates with the 50S ribosomal subunit.

Its function is as follows. GTPase that plays an essential role in the late steps of ribosome biogenesis. This Helicobacter pylori (strain ATCC 700392 / 26695) (Campylobacter pylori) protein is GTPase Der.